A 377-amino-acid polypeptide reads, in one-letter code: MKNLTIVADSNIASLDEFFNPIALGQNTEQQVQVIRVAGRDINAQLLADLQPDVLLIRSVTQIDQALLANNNSVKFVGSATIGTDHVDQDYLAERNITFANATGCSKHSVAQYVVSAILTLRPQYWAQSMTPLTLGIIGLGNIGSTLAQYASDLGWQVLGYDPLLATSDINNASLEQVLCQSDIVSLHVPLTDKKDTDTQGAMSISNNFSDYPTRHLINAETLARMSPHTMLINSARGPVIDAAALEADIDATERQVVLDVFEHEPQIAESLLSKLAIATPHIAGYTLEGKLRGTQIIYDALCEKLAVLPVLSMHQLLPLNTYLWSELKENPDRLLKFYDIKKDDTALRNKITSGQVKGSDFDQLRRDYHLRREWQA.

Residues Ser59 and Thr81 each coordinate substrate. Asp162 is an NAD(+) binding site. Residue Arg237 is part of the active site. An NAD(+)-binding site is contributed by Asp260. The active site involves Glu265. His282 acts as the Proton donor in catalysis. NAD(+) is bound at residue Gly285. Substrate is bound at residue Tyr286.

It belongs to the D-isomer specific 2-hydroxyacid dehydrogenase family. PdxB subfamily. In terms of assembly, homodimer.

It localises to the cytoplasm. The enzyme catalyses 4-phospho-D-erythronate + NAD(+) = (R)-3-hydroxy-2-oxo-4-phosphooxybutanoate + NADH + H(+). It functions in the pathway cofactor biosynthesis; pyridoxine 5'-phosphate biosynthesis; pyridoxine 5'-phosphate from D-erythrose 4-phosphate: step 2/5. Its function is as follows. Catalyzes the oxidation of erythronate-4-phosphate to 3-hydroxy-2-oxo-4-phosphonooxybutanoate. This chain is Erythronate-4-phosphate dehydrogenase, found in Psychrobacter arcticus (strain DSM 17307 / VKM B-2377 / 273-4).